The sequence spans 523 residues: Acetyl-CoA hydrolase (523 aa).

Gly277 to Ile281 is a binding site for CoA. Glu302 serves as the catalytic 5-glutamyl coenzyme A thioester intermediate. The CoA site is built by Asn392 and Gly396.

It belongs to the acetyl-CoA hydrolase/transferase family.

The protein resides in the cytoplasm. The enzyme catalyses acetyl-CoA + H2O = acetate + CoA + H(+). In terms of biological role, presumably involved in regulating the intracellular acetyl-CoA pool for fatty acid and cholesterol synthesis and fatty acid oxidation. This chain is Acetyl-CoA hydrolase (ACH1), found in Eremothecium gossypii (strain ATCC 10895 / CBS 109.51 / FGSC 9923 / NRRL Y-1056) (Yeast).